A 224-amino-acid polypeptide reads, in one-letter code: Myogenin (224 aa).

S77 and S79 each carry phosphoserine; by CaMK2G. The 52-residue stretch at D81 to L132 folds into the bHLH domain. T87 is modified (phosphothreonine; by CaMK2G).

Homodimer and heterodimer with E12; heterodimerization enhances MYOG DNA-binding and transcriptional activities. Interacts with SMARCA4/BRG1/BAF190A. Interacts (via C-terminal region) with SSRP1 and SUPT16H; the interaction is indicative of an interaction with the FACT complex. Interacts with CSRP3. Post-translationally, phosphorylated by CAMK2G on threonine and serine amino acids in a muscle activity-dependent manner. Phosphorylation of Thr-87 impairs both DNA-binding and trans-activation functions in contracting muscles.

The protein localises to the nucleus. Acts as a transcriptional activator that promotes transcription of muscle-specific target genes and plays a role in muscle differentiation, cell cycle exit and muscle atrophy. Essential for the development of functional embryonic skeletal fiber muscle differentiation. However is dispensable for postnatal skeletal muscle growth; phosphorylation by CAMK2G inhibits its transcriptional activity in respons to muscle activity. Required for the recruitment of the FACT complex to muscle-specific promoter regions, thus promoting gene expression initiation. During terminal myoblast differentiation, plays a role as a strong activator of transcription at loci with an open chromatin structure previously initiated by MYOD1. Together with MYF5 and MYOD1, co-occupies muscle-specific gene promoter core regions during myogenesis. Also cooperates with myocyte-specific enhancer factor MEF2D and BRG1-dependent recruitment of SWI/SNF chromatin-remodeling enzymes to alter chromatin structure at myogenic late gene promoters. Facilitates cell cycle exit during terminal muscle differentiation through the up-regulation of miR-20a expression, which in turn represses genes involved in cell cycle progression. Binds to the E-box containing (E1) promoter region of the miR-20a gene. Also plays a role in preventing reversal of muscle cell differentiation. Contributes to the atrophy-related gene expression in adult denervated muscles. Induces fibroblasts to differentiate into myoblasts. The chain is Myogenin (MYOG) from Homo sapiens (Human).